The primary structure comprises 290 residues: Arylamine N-acetyltransferase 1 (290 aa).

M1 carries the post-translational modification N-acetylmethionine. C68 serves as the catalytic Acyl-thioester intermediate. S103 is a binding site for CoA. 106 to 107 (VH) is a substrate binding site. Residues H107 and D122 contribute to the active site. Y208 serves as a coordination point for CoA.

Belongs to the arylamine N-acetyltransferase family.

It is found in the cytoplasm. It carries out the reaction an arylamine + acetyl-CoA = an N-acetylarylamine + CoA. Participates in the detoxification of a plethora of hydrazine and arylamine drugs. Acetylates both arylamines and arylalkylamines. This chain is Arylamine N-acetyltransferase 1 (Nat1), found in Rattus norvegicus (Rat).